The sequence spans 455 residues: Na(+)/H(+) antiporter NhaA (455 aa).

The next 11 membrane-spanning stretches (helical) occupy residues alanine 31–tryptophan 51, glycine 83–glycine 103, phenylalanine 113–valine 133, glycine 141–glycine 161, valine 170–phenylalanine 190, valine 198–isoleucine 218, isoleucine 231–phenylalanine 251, glycine 309–valine 329, isoleucine 345–leucine 365, isoleucine 383–leucine 403, and serine 414–tryptophan 434.

It belongs to the NhaA Na(+)/H(+) (TC 2.A.33) antiporter family.

The protein resides in the cell inner membrane. It carries out the reaction Na(+)(in) + 2 H(+)(out) = Na(+)(out) + 2 H(+)(in). In terms of biological role, na(+)/H(+) antiporter that extrudes sodium in exchange for external protons. This Koribacter versatilis (strain Ellin345) protein is Na(+)/H(+) antiporter NhaA.